We begin with the raw amino-acid sequence, 946 residues long: MVEGRVSEFLKKLGFSGGGRQYQALEKDEEEALIDEQSELKAIEKEKKVTALPPKEACKCQKEDLARAFCVDLHTGLSEFSVTQRRLAHGWNEFVADNSEPVWKKYLDQFKNPLILLLLGSALVSVLTKEYEDAVSIATAVLVVVTVAFIQEYRSEKSLEELTKLVPPECNCLREGKLQHLLARELVPGDVVSLSIGDRIPADIRLTEVTDLLVDESSFTGEAEPCSKTDSPLTGGGDLTTLSNIVFMGTLVQYGRGQGVVIGTGESSQFGEVFKMMQAEETPKTPLQKSMDRLGKQLTLFSFGIIGLIMLIGWSQGKQLLSMFTIGVSLAVAAIPEGLPIVVMVTLVLGVLRMAKKRVIVKKLPIVETLGCCSVLCSDKTGTLTANEMTVTQLVTSDGLRAEVSGVGYDGQGTVCLLPSKEVIKEFSNVSVGKLVEAGCVANNAVIRKNAVMGQPTEGALMALAMKMDLSDIKNSYIRKKEIPFSSEQKWMAVKCSLKTEDQEDIYFMKGALEEVIRYCTMYNNGGIPLPLTPQQRSFCLQEEKRMGSLGLRVLALASGPELGRLTFLGLVGIIDPPRVGVKEAVQVLSESGVSVKMITGDALETALAIGRNIGLCNGKLQAMSGEEVDSVEKGELADRVGKVSVFFRTSPKHKLKIIKALQESGAIVAMTGDGVNDAVALKSADIGIAMGQTGTDVSKEAANMILVDDDFSAIMNAVEEGKGIFYNIKNFVRFQLSTSISALSLITLSTVFNLPSPLNAMQILWINIIMDGPPAQSLGVEPVDKDAFRQPPRSVRDTILSRALILKILMSAAIIISGTLFIFWKEMPEDRASTPRTTTMTFTCFVFFDLFNALTCRSQTKLIFEIGFLRNHMFLYSVLGSILGQLAVIYIPPLQRVFQTENLGALDLLFLTGLASSVFILSELLKLCEKYCCSPKRVQMHPEDV.

At 1–106 (MVEGRVSEFL…DNSEPVWKKY (106 aa)) the chain is on the cytoplasmic side. The tract at residues 71–95 (VDLHTGLSEFSVTQRRLAHGWNEFV) is interaction with ORAI1. Residues 107 to 127 (LDQFKNPLILLLLGSALVSVL) traverse the membrane as a helical segment. Residues 128 to 129 (TK) lie on the Extracellular side of the membrane. The helical transmembrane segment at 130-150 (EYEDAVSIATAVLVVVTVAFI) threads the bilayer. Topologically, residues 151-231 (QEYRSEKSLE…EAEPCSKTDS (81 aa)) are cytoplasmic. The helical transmembrane segment at 232-252 (PLTGGGDLTTLSNIVFMGTLV) threads the bilayer. The Extracellular segment spans residues 253–293 (QYGRGQGVVIGTGESSQFGEVFKMMQAEETPKTPLQKSMDR). Position 264 is a phosphothreonine (threonine 264). 2 positions are modified to phosphoserine: serine 267 and serine 268. The helical transmembrane segment at 294 to 314 (LGKQLTLFSFGIIGLIMLIGW) threads the bilayer. Residues 315–331 (SQGKQLLSMFTIGVSLA) are Cytoplasmic-facing. Ca(2+)-binding residues include valine 332, alanine 333, isoleucine 335, and glutamate 337. A helical transmembrane segment spans residues 332-352 (VAAIPEGLPIVVMVTLVLGVL). The Extracellular segment spans residues 353–750 (RMAKKRVIVK…ISALSLITLS (398 aa)). Residue aspartate 379 is the 4-aspartylphosphate intermediate of the active site. Mg(2+)-binding residues include aspartate 674 and aspartate 678. Residues 751-771 (TVFNLPSPLNAMQILWINIIM) traverse the membrane as a helical segment. Ca(2+) is bound by residues asparagine 768 and aspartate 772. The Cytoplasmic portion of the chain corresponds to 772–804 (DGPPAQSLGVEPVDKDAFRQPPRSVRDTILSRA). A helical membrane pass occupies residues 805-825 (LILKILMSAAIIISGTLFIFW). At 826-837 (KEMPEDRASTPR) the chain is on the extracellular side. The helical transmembrane segment at 838 to 855 (TTTMTFTCFVFFDLFNAL) threads the bilayer. The Cytoplasmic segment spans residues 856-874 (TCRSQTKLIFEIGFLRNHM). A helical membrane pass occupies residues 875–895 (FLYSVLGSILGQLAVIYIPPL). Topologically, residues 896 to 905 (QRVFQTENLG) are extracellular. The chain crosses the membrane as a helical span at residues 906–926 (ALDLLFLTGLASSVFILSELL). At 927–946 (KLCEKYCCSPKRVQMHPEDV) the chain is on the cytoplasmic side.

It belongs to the cation transport ATPase (P-type) (TC 3.A.3) family. Type IIA subfamily. In terms of assembly, interacts (via N-terminus) with ORAI1 (via N- and C-termini); this interaction regulates Ca(2+) influx at the plasma membrane. Highly expressed in the gastrointestinal and respiratory tracts, prostate, thyroid, salivary, and mammary glands. Expressed in colon epithelial cells (at protein level). Expressed in brain and testis (at protein level).

Its subcellular location is the golgi apparatus. It localises to the trans-Golgi network membrane. The protein resides in the cell membrane. The protein localises to the basolateral cell membrane. The catalysed reaction is Ca(2+)(in) + ATP + H2O = Ca(2+)(out) + ADP + phosphate + H(+). It carries out the reaction Mn(2+)(in) + ATP + H2O = Mn(2+)(out) + ADP + phosphate + H(+). Functionally, ATP-driven pump that supplies the Golgi apparatus with Ca(2+) and Mn(2+) ions, both essential cofactors for processing and trafficking of newly synthesized proteins in the secretory pathway. Within a catalytic cycle, acquires Ca(2+) or Mn(2+) ions on the cytoplasmic side of the membrane and delivers them to the lumenal side. The transfer of ions across the membrane is coupled to ATP hydrolysis and is associated with a transient phosphorylation that shifts the pump conformation from inward-facing to outward-facing state. Induces Ca(2+) influx independently of its ATP-driven pump function. At the basolateral membrane of mammary epithelial cells, interacts with Ca(2+) channel ORAI1 and mediates Ca(2+) entry independently of the Ca(2+) content of endoplasmic reticulum or Golgi stores. May facilitate transepithelial transport of large quantities of Ca(2+) for milk secretion via activation of Ca(2+) influx channels at the plasma membrane and active Ca(2+) transport at the Golgi apparatus. The sequence is that of Calcium-transporting ATPase type 2C member 2 from Homo sapiens (Human).